A 249-amino-acid chain; its full sequence is Elsinochromes biosynthesis cluster protein HP3 (249 aa).

N-linked (GlcNAc...) asparagine glycosylation occurs at Asn106. Residues 138-158 (VVFAFMLSAWLVWLITVYAFA) form a helical membrane-spanning segment.

The protein resides in the membrane. In terms of biological role, part of the gene cluster that mediates the biosynthesis of elsinochromes, pigments consisting of at least four interconvertible tautomers (A, B, C and D) that have a core phenolic quinone to which various side chains are attached and which play an important role in fungal pathogenesis. The non-reducing polyketide synthase PKS1 was proposed to iteratively catalyze decarboxylation between acetyl-CoA and malonyl-CoA subunits for polyketide chain elongation. The released polyketide undergoes cyclization to form an aromatic ring, and proceeds via serial modification steps to produce the heptaketide back- bone of elsinochrome. As elsinochrome has a symmetrical structure, two identical heptaketides are fused to form a core 1,2-dihydrobenzo-perylene ring structure, which can then be successively modified to produce the various derivatives of elsinochrome. Some of these reactions may be cooperatively carried out, at least in part, by the products of RDT1, OXR1 and PKS1. PRF1, embedded within the elsinochrome cluster possibly functions to stabilize some of the biosynthetic enzymes required for elsinochrome production. As prefoldin is a hexamer containing 2 a and 4 b subunits, additional prefoldin subunits, whose coding genes may not immediately link to the elsinochrome biosynthetic gene cluster, are required to fulfill the chaperone function. In addition, no methyltransferase-coding gene exists within the biosynthetic gene cluster, even though elsinochrome has four methyl groups at positions C3, C7, C8 and C12. Apparently, the identified gene cluster does not contain the entire entourage of genes responsible for elsinochrome biosynthesis. Once elsinochrome is synthesized, it must be exported outside the fungal cells, which is probably accomplished by the ECT1 transporter, to avoid toxicity. The chain is Elsinochromes biosynthesis cluster protein HP3 from Elsinoe fawcettii (Citrus scab fungus).